The primary structure comprises 593 residues: NADH-quinone oxidoreductase subunit C/D 1 (593 aa).

Residues 1–193 (MPWAKEGDLQ…DNLEGLMNYD (193 aa)) form an NADH dehydrogenase I subunit C region. Residues 217-593 (AQIVLNWGPL…IDPVVGETDR (377 aa)) are NADH dehydrogenase I subunit D.

The protein in the N-terminal section; belongs to the complex I 30 kDa subunit family. It in the C-terminal section; belongs to the complex I 49 kDa subunit family. NDH-1 is composed of 13 different subunits. Subunits NuoB, CD, E, F, and G constitute the peripheral sector of the complex.

The protein resides in the cell inner membrane. The catalysed reaction is a quinone + NADH + 5 H(+)(in) = a quinol + NAD(+) + 4 H(+)(out). Its function is as follows. NDH-1 shuttles electrons from NADH, via FMN and iron-sulfur (Fe-S) centers, to quinones in the respiratory chain. The immediate electron acceptor for the enzyme in this species is believed to be ubiquinone. Couples the redox reaction to proton translocation (for every two electrons transferred, four hydrogen ions are translocated across the cytoplasmic membrane), and thus conserves the redox energy in a proton gradient. The chain is NADH-quinone oxidoreductase subunit C/D 1 (nuoC1) from Aquifex aeolicus (strain VF5).